Consider the following 318-residue polypeptide: Acetaldehyde dehydrogenase 1 (318 aa).

15–18 lines the NAD(+) pocket; it reads SGNI. The Acyl-thioester intermediate role is filled by cysteine 133. NAD(+) is bound by residues 164 to 172 and asparagine 289; that span reads SAGPGTRAN.

The protein belongs to the acetaldehyde dehydrogenase family.

The catalysed reaction is acetaldehyde + NAD(+) + CoA = acetyl-CoA + NADH + H(+). The chain is Acetaldehyde dehydrogenase 1 (xylQ) from Azotobacter vinelandii (strain DJ / ATCC BAA-1303).